The sequence spans 261 residues: Hydroxyethylthiazole kinase (261 aa).

M39 lines the substrate pocket. ATP-binding residues include R115 and T159. G186 provides a ligand contact to substrate.

It belongs to the Thz kinase family. The cofactor is Mg(2+).

It catalyses the reaction 5-(2-hydroxyethyl)-4-methylthiazole + ATP = 4-methyl-5-(2-phosphooxyethyl)-thiazole + ADP + H(+). The protein operates within cofactor biosynthesis; thiamine diphosphate biosynthesis; 4-methyl-5-(2-phosphoethyl)-thiazole from 5-(2-hydroxyethyl)-4-methylthiazole: step 1/1. Its function is as follows. Catalyzes the phosphorylation of the hydroxyl group of 4-methyl-5-beta-hydroxyethylthiazole (THZ). This chain is Hydroxyethylthiazole kinase, found in Macrococcus caseolyticus (strain JCSC5402) (Macrococcoides caseolyticum).